The chain runs to 431 residues: Probable prephenate dehydrogenase [NADP(+)] (431 aa).

5–34 (FQVGIIGFGDMGRLYAEYISKAGWRVNVCD) lines the NADP(+) pocket. A Prephenate/arogenate dehydrogenase domain is found at 5 to 285 (FQVGIIGFGD…GENMDRNSSG (281 aa)).

It belongs to the prephenate/arogenate dehydrogenase family.

It is found in the cytoplasm. The catalysed reaction is prephenate + NADP(+) = 3-(4-hydroxyphenyl)pyruvate + CO2 + NADPH. It participates in amino-acid biosynthesis; L-tyrosine biosynthesis; (4-hydroxyphenyl)pyruvate from prephenate (NADP(+) route): step 1/1. This Schizosaccharomyces pombe (strain 972 / ATCC 24843) (Fission yeast) protein is Probable prephenate dehydrogenase [NADP(+)] (tyr1).